The primary structure comprises 294 residues: UDP-3-O-acyl-N-acetylglucosamine deacetylase (294 aa).

Residues His75, His232, and Asp236 each coordinate Zn(2+). Residue His259 is the Proton donor of the active site.

Belongs to the LpxC family. The cofactor is Zn(2+).

The catalysed reaction is a UDP-3-O-[(3R)-3-hydroxyacyl]-N-acetyl-alpha-D-glucosamine + H2O = a UDP-3-O-[(3R)-3-hydroxyacyl]-alpha-D-glucosamine + acetate. It functions in the pathway glycolipid biosynthesis; lipid IV(A) biosynthesis; lipid IV(A) from (3R)-3-hydroxytetradecanoyl-[acyl-carrier-protein] and UDP-N-acetyl-alpha-D-glucosamine: step 2/6. Its function is as follows. Catalyzes the hydrolysis of UDP-3-O-myristoyl-N-acetylglucosamine to form UDP-3-O-myristoylglucosamine and acetate, the committed step in lipid A biosynthesis. In Sulfurovum sp. (strain NBC37-1), this protein is UDP-3-O-acyl-N-acetylglucosamine deacetylase.